Here is a 289-residue protein sequence, read N- to C-terminus: Purine nucleoside phosphorylase (289 aa).

N-acetylmethionine is present on M1. Residues S33, H64, and 84 to 86 (RFH) contribute to the phosphate site. Y88 is a binding site for a purine D-ribonucleoside. A116 is a phosphate binding site. A purine D-ribonucleoside contacts are provided by E201 and M219. S220 is a binding site for phosphate. N243 is a binding site for a purine D-ribonucleoside. S251 is subject to Phosphoserine. An a purine D-ribonucleoside-binding site is contributed by H257.

Belongs to the PNP/MTAP phosphorylase family. In terms of assembly, homotrimer.

Its subcellular location is the cytoplasm. It catalyses the reaction inosine + phosphate = alpha-D-ribose 1-phosphate + hypoxanthine. The enzyme catalyses guanosine + phosphate = alpha-D-ribose 1-phosphate + guanine. The catalysed reaction is 2'-deoxyguanosine + phosphate = 2-deoxy-alpha-D-ribose 1-phosphate + guanine. It carries out the reaction 2'-deoxyinosine + phosphate = 2-deoxy-alpha-D-ribose 1-phosphate + hypoxanthine. It participates in purine metabolism; purine nucleoside salvage. Catalyzes the phosphorolytic breakdown of the N-glycosidic bond in the beta-(deoxy)ribonucleoside molecules, with the formation of the corresponding free purine bases and pentose-1-phosphate. Preferentially acts on 6-oxopurine nucleosides including inosine and guanosine. The sequence is that of Purine nucleoside phosphorylase (PNP) from Bos taurus (Bovine).